Reading from the N-terminus, the 139-residue chain is Putative nickel-responsive regulator (139 aa).

Positions 79, 90, 92, and 98 each coordinate Ni(2+).

It belongs to the transcriptional regulatory CopG/NikR family. It depends on Ni(2+) as a cofactor.

Functionally, transcriptional regulator. The polypeptide is Putative nickel-responsive regulator (Geobacter sulfurreducens (strain ATCC 51573 / DSM 12127 / PCA)).